The chain runs to 186 residues: Elongation factor P (186 aa).

The protein belongs to the elongation factor P family.

The protein resides in the cytoplasm. The protein operates within protein biosynthesis; polypeptide chain elongation. Involved in peptide bond synthesis. Stimulates efficient translation and peptide-bond synthesis on native or reconstituted 70S ribosomes in vitro. Probably functions indirectly by altering the affinity of the ribosome for aminoacyl-tRNA, thus increasing their reactivity as acceptors for peptidyl transferase. This is Elongation factor P from Streptococcus sanguinis (strain SK36).